The following is a 413-amino-acid chain: Azaphilone biosynthesis cluster protein M (413 aa).

Positions 123-138 (STQPDQVQPNQPTPSF) are enriched in polar residues. Positions 123-145 (STQPDQVQPNQPTPSFESAAGAS) are disordered.

Its pathway is secondary metabolite biosynthesis. In terms of biological role, part of the gene cluster that mediates the biosynthesis of azaterrilone A and other azaphilones, a class of fungal metabolites characterized by a highly oxygenated pyrano-quinone bicyclic core and exhibiting a broad range of bioactivities. The first step of the pathway begins with the non-reducing polyketide synthase tazA that assembles one acetyl-CoA starter unit, five malonyl-CoA units, and catalyzes a series of Claisen condensations, methylation, PT-mediated cyclization, and finally releases the first hexaketide precursor through the R-domain. The tazA product then undergoes reduction on its terminal ketone and the following pyran-ring formation by yet undetermined enzyme(s). Dehydration and enoyl reduction, possibly involving the trans-enoyl reductase tazE leads to the next intermediate. TazD is predicted as an acetyltransferase and might catalyze the acetylation steps leading to the synthesis of azaterrilone A. Azaterrilone A is not the final product of the taz pathway and both the highly reducing polyketide synthase tazB and the dual enzyme tazHJ catalyze late steps of the pathway, leading to the production of the 2 final stereoisomers that contain additional polyketide modification whose structures have still to be determined. In Aspergillus terreus (strain NIH 2624 / FGSC A1156), this protein is Azaphilone biosynthesis cluster protein M.